The chain runs to 315 residues: Ferrochelatase (315 aa).

The Fe cation site is built by H193 and E273.

Belongs to the ferrochelatase family.

The protein resides in the cytoplasm. The catalysed reaction is heme b + 2 H(+) = protoporphyrin IX + Fe(2+). It functions in the pathway porphyrin-containing compound metabolism; protoheme biosynthesis; protoheme from protoporphyrin-IX: step 1/1. Functionally, catalyzes the ferrous insertion into protoporphyrin IX. This chain is Ferrochelatase, found in Wolbachia sp. subsp. Drosophila simulans (strain wRi).